The primary structure comprises 179 residues: Large ribosomal subunit protein uL5 (179 aa).

This sequence belongs to the universal ribosomal protein uL5 family. As to quaternary structure, part of the 50S ribosomal subunit; part of the 5S rRNA/L5/L18/L25 subcomplex. Contacts the 5S rRNA and the P site tRNA. Forms a bridge to the 30S subunit in the 70S ribosome.

Its function is as follows. This is one of the proteins that bind and probably mediate the attachment of the 5S RNA into the large ribosomal subunit, where it forms part of the central protuberance. In the 70S ribosome it contacts protein S13 of the 30S subunit (bridge B1b), connecting the 2 subunits; this bridge is implicated in subunit movement. Contacts the P site tRNA; the 5S rRNA and some of its associated proteins might help stabilize positioning of ribosome-bound tRNAs. The protein is Large ribosomal subunit protein uL5 of Bacillus cereus (strain G9842).